A 193-amino-acid polypeptide reads, in one-letter code: DNA damage-inducible transcript 4-like protein (193 aa).

The protein belongs to the DDIT4 family. In terms of tissue distribution, up-regulated in atherosclerotic plaques relative to healthy segments of the same artery.

It is found in the cytoplasm. Its function is as follows. Inhibits cell growth by regulating the TOR signaling pathway upstream of the TSC1-TSC2 complex and downstream of AKT1. This chain is DNA damage-inducible transcript 4-like protein (DDIT4L), found in Homo sapiens (Human).